We begin with the raw amino-acid sequence, 807 residues long: Glycerol-3-phosphate acyltransferase (807 aa).

The short motif at Cys305 to Met310 is the HXXXXD motif element.

Belongs to the GPAT/DAPAT family.

It localises to the cell inner membrane. The catalysed reaction is sn-glycerol 3-phosphate + an acyl-CoA = a 1-acyl-sn-glycero-3-phosphate + CoA. Its pathway is phospholipid metabolism; CDP-diacylglycerol biosynthesis; CDP-diacylglycerol from sn-glycerol 3-phosphate: step 1/3. The sequence is that of Glycerol-3-phosphate acyltransferase from Aliivibrio fischeri (strain MJ11) (Vibrio fischeri).